The following is a 177-amino-acid chain: Large ribosomal subunit protein uL6 (177 aa).

This sequence belongs to the universal ribosomal protein uL6 family. As to quaternary structure, part of the 50S ribosomal subunit.

Functionally, this protein binds to the 23S rRNA, and is important in its secondary structure. It is located near the subunit interface in the base of the L7/L12 stalk, and near the tRNA binding site of the peptidyltransferase center. The sequence is that of Large ribosomal subunit protein uL6 from Colwellia psychrerythraea (strain 34H / ATCC BAA-681) (Vibrio psychroerythus).